A 66-amino-acid chain; its full sequence is U8-myrmicitoxin-Tb1a (66 aa).

The N-terminal stretch at M1–A26 is a signal peptide. A propeptide spanning residues K27–A50 is cleaved from the precursor.

As to expression, expressed by the venom gland.

The protein resides in the secreted. In vivo, this neurotoxin paralyzes about 50% of blowflies (L.caesar) one hour after intrathoracic injection, when tested at high doses (54 nmol/g). In Tetramorium bicarinatum (Tramp ant), this protein is U8-myrmicitoxin-Tb1a.